The following is a 272-amino-acid chain: Probable ribosomal RNA small subunit methyltransferase A (272 aa).

S-adenosyl-L-methionine is bound by residues N23, L25, G50, E71, D95, and N110.

It belongs to the class I-like SAM-binding methyltransferase superfamily. rRNA adenine N(6)-methyltransferase family. RsmA subfamily.

It localises to the cytoplasm. Functionally, specifically dimethylates two adjacent adenosines in the loop of a conserved hairpin near the 3'-end of 16S rRNA in the 30S particle. May play a critical role in biogenesis of 30S subunits. This Thermococcus onnurineus (strain NA1) protein is Probable ribosomal RNA small subunit methyltransferase A.